A 158-amino-acid chain; its full sequence is Probable deoxyuridine 5'-triphosphate nucleotidohydrolase (158 aa).

The protein belongs to the dUTPase family. Mg(2+) is required as a cofactor.

The catalysed reaction is dUTP + H2O = dUMP + diphosphate + H(+). Its pathway is pyrimidine metabolism; dUMP biosynthesis; dUMP from dCTP (dUTP route): step 1/2. This enzyme is involved in nucleotide metabolism: it produces dUMP, the immediate precursor of thymidine nucleotides and it decreases the intracellular concentration of dUTP so that uracil cannot be incorporated into DNA. It does probably not deaminate dCTP. This is Probable deoxyuridine 5'-triphosphate nucleotidohydrolase from Sulfolobus islandicus rod-shaped virus 1 (SIRV-1).